The primary structure comprises 224 residues: Heme response regulator HssR (224 aa).

The Response regulatory domain maps to 3 to 116 (TCLIVDDDPK…ELMFRIKAVL (114 aa)). Aspartate 52 is subject to 4-aspartylphosphate. Positions 124–222 (NNEVSIGNLT…VRGLGYKVDD (99 aa)) form a DNA-binding region, ompR/PhoB-type.

Phosphorylated by HssS.

It localises to the cytoplasm. Functionally, member of the two-component regulatory system HssS/HssR involved in intracellular heme homeostasis and tempering of staphylococcal virulence. Phosphorylated HssR binds to a direct repeat sequence within hrtAB promoter and activates the expression of hrtAB, an efflux pump, in response to extracellular heme, hemin, hemoglobin or blood. The protein is Heme response regulator HssR (hssR) of Staphylococcus saprophyticus subsp. saprophyticus (strain ATCC 15305 / DSM 20229 / NCIMB 8711 / NCTC 7292 / S-41).